The chain runs to 385 residues: Mannitol-1-phosphate 5-dehydrogenase (385 aa).

3 to 14 serves as a coordination point for NAD(+); it reads ALQFGAGNIGRG.

Belongs to the mannitol dehydrogenase family.

The catalysed reaction is D-mannitol 1-phosphate + NAD(+) = beta-D-fructose 6-phosphate + NADH + H(+). This Buchnera aphidicola subsp. Acyrthosiphon pisum (strain 5A) protein is Mannitol-1-phosphate 5-dehydrogenase.